The primary structure comprises 256 residues: Imidazole glycerol phosphate synthase subunit HisF (256 aa).

Catalysis depends on residues Asp-12 and Asp-131.

It belongs to the HisA/HisF family. As to quaternary structure, heterodimer of HisH and HisF.

It localises to the cytoplasm. The catalysed reaction is 5-[(5-phospho-1-deoxy-D-ribulos-1-ylimino)methylamino]-1-(5-phospho-beta-D-ribosyl)imidazole-4-carboxamide + L-glutamine = D-erythro-1-(imidazol-4-yl)glycerol 3-phosphate + 5-amino-1-(5-phospho-beta-D-ribosyl)imidazole-4-carboxamide + L-glutamate + H(+). The protein operates within amino-acid biosynthesis; L-histidine biosynthesis; L-histidine from 5-phospho-alpha-D-ribose 1-diphosphate: step 5/9. In terms of biological role, IGPS catalyzes the conversion of PRFAR and glutamine to IGP, AICAR and glutamate. The HisF subunit catalyzes the cyclization activity that produces IGP and AICAR from PRFAR using the ammonia provided by the HisH subunit. The sequence is that of Imidazole glycerol phosphate synthase subunit HisF from Thermobifida fusca (strain YX).